Reading from the N-terminus, the 181-residue chain is Reverse rubrerythrin-1 (181 aa).

Residues 1 to 35 enclose the Rubredoxin-like domain; sequence MKKFKCVVCGYIYTGEDAPEKCPVCGAGKDKFVEV. Residues Cys-6, Cys-9, Cys-22, Cys-25, Glu-69, Glu-102, Glu-132, Glu-165, and His-168 each contribute to the Fe cation site. A Ferritin-like diiron domain is found at 52-181; the sequence is KGVDKEVLEG…FRGLLNRYFK (130 aa).

As to quaternary structure, homodimer. It depends on Fe(3+) as a cofactor.

It catalyses the reaction H2O2 + NADH + H(+) = NAD(+) + 2 H2O. Its function is as follows. Functions as the terminal component of an NADH peroxidase (NADH:H(2)O(2) oxidoreductase) when using NADH:rubredoxin oxidoreductase (NROR) and rubredoxin (Rd) as electron transport intermediaries from NADH to revRbr 1. Plays an important role in the oxidative stress defense system in C.acetobutylicum, an obligate anaerobic bacterium. Also exhibits NADH oxidase (NADH:O(2) oxidoreductase) activity in vitro, which is 100-fold lesser than that of FprA1/2 using the same electron transfer components. Therefore, its predominant function is most likely as a scavenger of its preferred substrate, H(2)O(2). This chain is Reverse rubrerythrin-1 (rbr3A), found in Clostridium acetobutylicum (strain ATCC 824 / DSM 792 / JCM 1419 / IAM 19013 / LMG 5710 / NBRC 13948 / NRRL B-527 / VKM B-1787 / 2291 / W).